The sequence spans 377 residues: Nitric oxide reductase FlRd-NAD(+) reductase (377 aa).

The protein belongs to the FAD-dependent oxidoreductase family. FAD serves as cofactor.

Its subcellular location is the cytoplasm. It carries out the reaction 2 reduced [nitric oxide reductase rubredoxin domain] + NAD(+) + H(+) = 2 oxidized [nitric oxide reductase rubredoxin domain] + NADH. The protein operates within nitrogen metabolism; nitric oxide reduction. In terms of biological role, one of at least two accessory proteins for anaerobic nitric oxide (NO) reductase. Reduces the rubredoxin moiety of NO reductase. This is Nitric oxide reductase FlRd-NAD(+) reductase from Escherichia coli O17:K52:H18 (strain UMN026 / ExPEC).